A 343-amino-acid polypeptide reads, in one-letter code: GTPase Obg (343 aa).

In terms of domain architecture, Obg spans 1 to 159 (MKFVDSASIF…LQLDMELKLM (159 aa)). The segment at 121–144 (GHGGRGNQHFATSTNQAPRRSEPG) is disordered. Positions 129–138 (HFATSTNQAP) are enriched in polar residues. The OBG-type G domain maps to 160-323 (ADVGLVGFPN…LKDELWREVS (164 aa)). Residues 166-173 (GFPNAGKS), 191-195 (FTTLV), 213-216 (DIPG), 280-283 (TKMD), and 304-306 (SSV) each bind GTP. S173 and T193 together coordinate Mg(2+). Positions 322–343 (VSMRDRPEESSDPEGEGDGGTP) are disordered. A compositionally biased stretch (acidic residues) spans 331–343 (SSDPEGEGDGGTP).

It belongs to the TRAFAC class OBG-HflX-like GTPase superfamily. OBG GTPase family. In terms of assembly, monomer. Requires Mg(2+) as cofactor.

Its subcellular location is the cytoplasm. Its function is as follows. An essential GTPase which binds GTP, GDP and possibly (p)ppGpp with moderate affinity, with high nucleotide exchange rates and a fairly low GTP hydrolysis rate. Plays a role in control of the cell cycle, stress response, ribosome biogenesis and in those bacteria that undergo differentiation, in morphogenesis control. The protein is GTPase Obg of Chlorobium luteolum (strain DSM 273 / BCRC 81028 / 2530) (Pelodictyon luteolum).